Reading from the N-terminus, the 507-residue chain is MVTIRADEISSIIRERIEQYTREVKVVNTGTVLQVGDGIARVHGLDKVMAGELVEFEEGTVGIALNLESNNVGVVLMGDGLLIQEGSSVKATGKIAQIPVSDGYLGRVLNALAKPIDGRGEISASESRLIESPAPGIIARRSVYEPLQTGIIAIDAMIPIGRGQRELIIGDRQTGKTAVATDTILNQKGQNVICVYVAIGQKASSVAQVVTALQERGAMDYTIVVAETADSPATLQYLAPYTGAALAEYFMYRKQHTLIIYDDLSKQAQAYRQMSLLLRRPPGREAYPGDVFYLHSRLLERAAKLSNELGEGSMTALPIVETQSGDVSAYIPTNVISITDGQIFLSADLFNAGIRPAINVGISVSRVGSAAQIKAMKQVAGKLKLELAQFAELEAFAQFASDLDKATQNQLARGQRLRELLKQSQSAPLGVDEQIATIFTGANGYLDSLEVGQVRKFLVQLRTYLKKNKPQFQEIISSTKTFTPEAEALLKEAIQEHIELFLQQEQA.

Gly170–Thr177 provides a ligand contact to ATP.

The protein belongs to the ATPase alpha/beta chains family. In terms of assembly, F-type ATPases have 2 components, CF(1) - the catalytic core - and CF(0) - the membrane proton channel. CF(1) has five subunits: alpha(3), beta(3), gamma(1), delta(1), epsilon(1). CF(0) has four main subunits: a, b, b' and c.

It localises to the plastid. Its subcellular location is the chloroplast thylakoid membrane. It carries out the reaction ATP + H2O + 4 H(+)(in) = ADP + phosphate + 5 H(+)(out). Functionally, produces ATP from ADP in the presence of a proton gradient across the membrane. The alpha chain is a regulatory subunit. This Lemna minor (Common duckweed) protein is ATP synthase subunit alpha, chloroplastic.